The following is a 208-amino-acid chain: Proteasome subunit beta 2 (208 aa).

Positions 1 to 14 are cleaved as a propeptide — removed in mature form; by autocatalysis; the sequence is MGNELQLENKILKG. T15 (nucleophile) is an active-site residue.

The protein belongs to the peptidase T1B family. The 20S proteasome core is composed of 14 alpha and 14 beta subunits that assemble into four stacked heptameric rings, resulting in a barrel-shaped structure. The two inner rings, each composed of seven catalytic beta subunits, are sandwiched by two outer rings, each composed of seven alpha subunits. The catalytic chamber with the active sites is on the inside of the barrel. Has a gated structure, the ends of the cylinder being occluded by the N-termini of the alpha-subunits. Is capped at one or both ends by the proteasome regulatory ATPase, PAN.

It is found in the cytoplasm. It carries out the reaction Cleavage of peptide bonds with very broad specificity.. Its activity is regulated as follows. The formation of the proteasomal ATPase PAN-20S proteasome complex, via the docking of the C-termini of PAN into the intersubunit pockets in the alpha-rings, triggers opening of the gate for substrate entry. Interconversion between the open-gate and close-gate conformations leads to a dynamic regulation of the 20S proteasome proteolysis activity. Its function is as follows. Component of the proteasome core, a large protease complex with broad specificity involved in protein degradation. This Saccharolobus solfataricus (strain ATCC 35092 / DSM 1617 / JCM 11322 / P2) (Sulfolobus solfataricus) protein is Proteasome subunit beta 2.